The following is a 264-amino-acid chain: Phosphate import ATP-binding protein PstB 1 (264 aa).

Positions 20–259 (LETRDLNIFY…PKIKLTEDYI (240 aa)) constitute an ABC transporter domain. An ATP-binding site is contributed by 52 to 59 (GASGSGKS).

It belongs to the ABC transporter superfamily. Phosphate importer (TC 3.A.1.7) family. As to quaternary structure, the complex is composed of two ATP-binding proteins (PstB), two transmembrane proteins (PstC and PstA) and a solute-binding protein (PstS).

It localises to the cell membrane. The enzyme catalyses phosphate(out) + ATP + H2O = ADP + 2 phosphate(in) + H(+). In terms of biological role, part of the ABC transporter complex PstSACB involved in phosphate import. Responsible for energy coupling to the transport system. This chain is Phosphate import ATP-binding protein PstB 1, found in Ligilactobacillus salivarius (strain UCC118) (Lactobacillus salivarius).